A 205-amino-acid chain; its full sequence is tRNA (guanine-N(7)-)-methyltransferase (205 aa).

S-adenosyl-L-methionine-binding residues include Glu-34, Glu-59, Asp-86, and Asp-107. The active site involves Asp-107. Lys-111 contacts substrate. Residues 113 to 118 (RHEKRR) are interaction with RNA. Residues Asp-144 and 182 to 185 (TGYE) contribute to the substrate site.

Belongs to the class I-like SAM-binding methyltransferase superfamily. TrmB family.

The enzyme catalyses guanosine(46) in tRNA + S-adenosyl-L-methionine = N(7)-methylguanosine(46) in tRNA + S-adenosyl-L-homocysteine. The protein operates within tRNA modification; N(7)-methylguanine-tRNA biosynthesis. Catalyzes the formation of N(7)-methylguanine at position 46 (m7G46) in tRNA. The sequence is that of tRNA (guanine-N(7)-)-methyltransferase from Mycoplasmopsis synoviae (strain 53) (Mycoplasma synoviae).